The chain runs to 476 residues: MSYEERANAHPNLGDESDVEEEALVNDYREQVNFDDSMSELDRTTSLGAGSQTQDLQAQLAAAATPLEYQATLETKFASYDNYCSLFHYILNSDGPVELEVPSYYWAWDVIDEFIYQFESFCRYRNRVARSGSNEEEAQLLRENPNTWGCYSVLNVLYSLIQRSQINEQLAAIKRGEDPMAFAGEYGSRPLYKMLGYFSIIGLLRVHCLLGDFSLALKTLDDIEMNKKAMFARVMAAHFTTYYYVGFSYMMMRRYGDAIRMFSHILVYVSRTKNFQKGGNSYDAIAKKNDQMYALIAICVALHPTRLDDTIHSALREKYGEQLHRLQHGGPEALPLFEELFRSACPKFISPTPPDFDNPSVNVDPVDHHTAIFMDEVKNTLYNPTIRSYLKLYTTMDLQKLAGFLEVEPEKLRSWLLVNKQRSRQVRWVEGGLLEGEPVAANDLDYALENDLIHVSETKAGRRLVDWYLRNLARVY.

The region spanning 257 to 452 is the PCI domain; that stretch reads DAIRMFSHIL…DLDYALENDL (196 aa).

Belongs to the eIF-3 subunit L family. In terms of assembly, component of the eukaryotic translation initiation factor 3 (eIF-3) complex.

Its subcellular location is the cytoplasm. Functionally, component of the eukaryotic translation initiation factor 3 (eIF-3) complex, which is involved in protein synthesis of a specialized repertoire of mRNAs and, together with other initiation factors, stimulates binding of mRNA and methionyl-tRNAi to the 40S ribosome. The eIF-3 complex specifically targets and initiates translation of a subset of mRNAs involved in cell proliferation. This Aspergillus oryzae (strain ATCC 42149 / RIB 40) (Yellow koji mold) protein is Eukaryotic translation initiation factor 3 subunit L.